A 380-amino-acid chain; its full sequence is Cytochrome b (380 aa).

Transmembrane regions (helical) follow at residues 34-54 (FGSL…LLAA), 78-99 (WLIR…YLHI), 114-134 (WNTG…GYVL), and 179-199 (FFTL…IHLT). Residues histidine 84 and histidine 98 each coordinate heme b. Positions 183 and 197 each coordinate heme b. Histidine 202 contributes to the a ubiquinone binding site. Transmembrane regions (helical) follow at residues 227 to 247 (LKDI…ALFS), 289 to 309 (LGGV…PLLH), 321 to 341 (FSQL…WVGS), and 348 to 368 (FIII…ILFP).

This sequence belongs to the cytochrome b family. The cytochrome bc1 complex contains 11 subunits: 3 respiratory subunits (MT-CYB, CYC1 and UQCRFS1), 2 core proteins (UQCRC1 and UQCRC2) and 6 low-molecular weight proteins (UQCRH/QCR6, UQCRB/QCR7, UQCRQ/QCR8, UQCR10/QCR9, UQCR11/QCR10 and a cleavage product of UQCRFS1). This cytochrome bc1 complex then forms a dimer. It depends on heme b as a cofactor.

It is found in the mitochondrion inner membrane. Its function is as follows. Component of the ubiquinol-cytochrome c reductase complex (complex III or cytochrome b-c1 complex) that is part of the mitochondrial respiratory chain. The b-c1 complex mediates electron transfer from ubiquinol to cytochrome c. Contributes to the generation of a proton gradient across the mitochondrial membrane that is then used for ATP synthesis. In Antigone antigone (Sarus crane), this protein is Cytochrome b (MT-CYB).